A 956-amino-acid chain; its full sequence is ATPase 11, plasma membrane-type (956 aa).

Residues 1–65 (MGDKEEVLEA…EKKESKFLKF (65 aa)) lie on the Cytoplasmic side of the membrane. Residues 66–85 (LGFMWNPLSWVMEAAAIMAI) traverse the membrane as a helical segment. The Extracellular portion of the chain corresponds to 86 to 97 (ALANGGGKPPDW). The chain crosses the membrane as a helical span at residues 98–118 (QDFVGIITLLVINSTISFIEE). The Cytoplasmic segment spans residues 119–247 (NNAGNAAAAL…GHFQQVLTAI (129 aa)). Residues 248–268 (GNFCICSIAVGMIIEIVVMYP) traverse the membrane as a helical segment. Over 269-277 (IQHRAYRPG) the chain is Extracellular. A helical transmembrane segment spans residues 278–295 (IDNLLVLLIGGIPIAMPT). The Cytoplasmic portion of the chain corresponds to 296–647 (VLSVTMAIGS…TSRAIFQRMK (352 aa)). Asp-333 acts as the 4-aspartylphosphate intermediate in catalysis. Positions 592 and 596 each coordinate Mg(2+). The helical transmembrane segment at 648 to 669 (NYTIYAVSITIRIVLGFMLLAL) threads the bilayer. Residues 670–674 (IWKFD) are Extracellular-facing. A helical membrane pass occupies residues 675–697 (FPPFMVLIIAILNDGTIMTISKD). The Cytoplasmic segment spans residues 698-713 (RVKPSPLPDSWKLSEI). Residues 714 to 734 (FATGVVFGSYMAMMTVIFFWA) form a helical membrane-spanning segment. Residues 735-759 (AYKTDFFPRTFGVSTLEKTAHDDFR) lie on the Extracellular side of the membrane. The helical transmembrane segment at 760-780 (KLASAIYLQVSIISQALIFVT) threads the bilayer. The Cytoplasmic segment spans residues 781–792 (RSRSWSYVERPG). A helical transmembrane segment spans residues 793–813 (MLLVVAFILAQLVATLIAVYA). Residues 814–821 (NWSFAAIE) lie on the Extracellular side of the membrane. A helical transmembrane segment spans residues 822 to 842 (GIGWGWAGVIWLYNIVFYIPL). Residues 843 to 956 (DIIKFLIRYA…IETIQQAYTV (114 aa)) lie on the Cytoplasmic side of the membrane. Thr-889 is subject to Phosphothreonine. Phosphoserine is present on Ser-938. Positions 954–956 (YTV) are interaction with 14-3-3 proteins. Phosphothreonine is present on Thr-955.

This sequence belongs to the cation transport ATPase (P-type) (TC 3.A.3) family. Type IIIA subfamily. Binds to 14-3-3 proteins. The binding is induced by phosphorylation of Thr-955. Binding to 14-3-3 proteins activates the H(+)-ATPase. As to expression, expressed in guard cells, mesophyll cells, leaves and roots.

Its subcellular location is the membrane. The catalysed reaction is ATP + H2O + H(+)(in) = ADP + phosphate + 2 H(+)(out). In terms of biological role, the plasma membrane H(+) ATPase of plants and fungi generates a proton gradient that drives the active transport of nutrients by H(+)-symport. The resulting external acidification and/or internal alkinization may mediate growth responses. This Arabidopsis thaliana (Mouse-ear cress) protein is ATPase 11, plasma membrane-type (AHA11).